Reading from the N-terminus, the 290-residue chain is Glycine-N-acyltransferase-like protein 3 (290 aa).

The enzyme catalyses an acyl-CoA + glycine = an N-acylglycine + CoA + H(+). It carries out the reaction (9Z)-octadecenoyl-CoA + glycine = N-(9Z-octadecenoyl)glycine + CoA + H(+). The catalysed reaction is hexadecanoyl-CoA + glycine = N-hexadecanoylglycine + CoA + H(+). It functions in the pathway lipid metabolism. In terms of biological role, catalyzes the conjugation of long-chain fatty acyl-CoA thioester and glycine to produce long-chain N-(fatty acyl)glycine, an intermediate in the primary fatty acid amide biosynthetic pathway. The protein is Glycine-N-acyltransferase-like protein 3 of Mus musculus (Mouse).